Reading from the N-terminus, the 309-residue chain is Olfactory receptor 8U1 (309 aa).

Residues 1 to 25 (MAHINCTQATEFILVGLTDHQELKM) lie on the Extracellular side of the membrane. Asn5 carries an N-linked (GlcNAc...) asparagine glycan. The helical transmembrane segment at 26–46 (PLFVLFLSIYLFTVVGNLGLI) threads the bilayer. Residues 47–54 (LLIRADTS) are Cytoplasmic-facing. The chain crosses the membrane as a helical span at residues 55 to 75 (LNTPMYFFLSNLAFVDFCYSS). At 76–99 (VITPKMLGNFLYKQNVISFDACAT) the chain is on the extracellular side. Cysteines 97 and 189 form a disulfide. A helical transmembrane segment spans residues 100 to 120 (QLGCFLTFMISESLLLASMAY). Residues 121–139 (DRYVAICNPLLYMVVMTPG) lie on the Cytoplasmic side of the membrane. A helical membrane pass occupies residues 140-160 (ICIQLVAVPYSYSFLMALFHT). The Extracellular segment spans residues 161 to 197 (ILTFRLSYCHSNIVNHFYCDDMPLLRLTCSDTRFKQL). A helical membrane pass occupies residues 198–217 (WIFACAGIMFISSLLIVFVS). The Cytoplasmic segment spans residues 218–237 (YMFIISAILRMHSAEGRQKA). The chain crosses the membrane as a helical span at residues 238–258 (FSTCGSHMLAVTIFYGTLIFM). Residues 259 to 271 (YLQPSSSHALDTD) are Extracellular-facing. A helical membrane pass occupies residues 272 to 292 (KMASVFYTVIIPMLNPLIYSL). At 293-309 (QNKEVKEALKKIIINKN) the chain is on the cytoplasmic side.

It belongs to the G-protein coupled receptor 1 family.

The protein resides in the cell membrane. Its function is as follows. Odorant receptor. The sequence is that of Olfactory receptor 8U1 (OR8U1) from Homo sapiens (Human).